A 117-amino-acid chain; its full sequence is Gamma-aminobutyric acid receptor-associated protein-like 1 (117 aa).

A lipid anchor (Phosphatidylethanolamine amidated glycine; alternate) is attached at Gly116. The Phosphatidylserine amidated glycine; alternate moiety is linked to residue Gly116. Lys117 is a propeptide (removed in mature form).

This sequence belongs to the ATG8 family. Interacts with ATG13, OPRK1, RB1CC1 and ULK1. Interacts with TP53INP1 and TP53INP2. Directly interacts with SQSTM1. Interacts with ATG3, ATG7 and MAP15. Interacts with TECPR2. Interacts with TBC1D5. Interacts with MAPK15. Interacts with TRIM5. Interacts with MEFV and TRIM21. Interacts with WDFY3. Interacts with the reticulophagy receptor TEX264. Interacts with UBA5. Interacts with KBTBD6 and KBTBD7; the interaction is direct. Interacts with reticulophagy regulators RETREG1, RETREG2 and RETREG3. Interacts with IRGM. Interacts with DNM2. Interacts with NCOA4 (via C-terminus). Post-translationally, the precursor molecule is cleaved by ATG4 (ATG4A, ATG4B, ATG4C or ATG4D) to expose the glycine at the C-terminus and form the cytosolic form, GABARAPL1-I. The processed form is then activated by APG7L/ATG7, transferred to ATG3 and conjugated to phosphatidylethanolamine (PE) phospholipid to form the membrane-bound form, GABARAPL1-II. During non-canonical autophagy, the processed form is conjugated to phosphatidylserine (PS) phospholipid. ATG4 proteins also mediate the delipidation of PE-conjugated forms required for GABARAPL1 recycling when autophagosomes fuse with lysosomes. In addition, ATG4B and ATG4D mediate delipidation of ATG8 proteins conjugated to PS during non-canonical autophagy. ATG4B constitutes the major protein for proteolytic activation. ATG4D is the main enzyme for delipidation activity.

The protein resides in the cytoplasmic vesicle. It is found in the autophagosome. The protein localises to the cytoplasmic vesicle membrane. Its subcellular location is the cytoplasm. It localises to the cytoskeleton. The protein resides in the endoplasmic reticulum. It is found in the golgi apparatus. Functionally, ubiquitin-like modifier that increases cell-surface expression of kappa-type opioid receptor through facilitating anterograde intracellular trafficking of the receptor. Involved in formation of autophagosomal vacuoles. While LC3s are involved in elongation of the phagophore membrane, the GABARAP/GATE-16 subfamily is essential for a later stage in autophagosome maturation. Through its interaction with the reticulophagy receptor TEX264, participates in the remodeling of subdomains of the endoplasmic reticulum into autophagosomes upon nutrient stress, which then fuse with lysosomes for endoplasmic reticulum turnover. This Bos taurus (Bovine) protein is Gamma-aminobutyric acid receptor-associated protein-like 1.